Reading from the N-terminus, the 420-residue chain is Tyrosine--tRNA ligase (420 aa).

An L-tyrosine-binding site is contributed by Tyr33. The short motif at 38-47 is the 'HIGH' region element; the sequence is PTADSLHIGH. Residues Tyr168 and Gln172 each coordinate L-tyrosine. The 'KMSKS' region signature appears at 231-235; it reads KFGKT. Residue Lys234 participates in ATP binding. Residues 353 to 419 form the S4 RNA-binding domain; that stretch reads MLLVDALIKV…GKKNYYLVKL (67 aa).

It belongs to the class-I aminoacyl-tRNA synthetase family. TyrS type 1 subfamily. In terms of assembly, homodimer.

It localises to the cytoplasm. It carries out the reaction tRNA(Tyr) + L-tyrosine + ATP = L-tyrosyl-tRNA(Tyr) + AMP + diphosphate + H(+). Catalyzes the attachment of tyrosine to tRNA(Tyr) in a two-step reaction: tyrosine is first activated by ATP to form Tyr-AMP and then transferred to the acceptor end of tRNA(Tyr). This chain is Tyrosine--tRNA ligase, found in Desulfitobacterium hafniense (strain DSM 10664 / DCB-2).